The chain runs to 162 residues: Ubiquitin-fold modifier-conjugating enzyme 1 (162 aa).

The active-site Glycyl thioester intermediate is cysteine 115.

The protein belongs to the ubiquitin-conjugating enzyme family. UFC1 subfamily. Interacts with uba-5.

Its function is as follows. E2-like enzyme which forms an intermediate with ufm-1. The intermediate is formed via a thioester linkage. The sequence is that of Ubiquitin-fold modifier-conjugating enzyme 1 from Caenorhabditis briggsae.